Reading from the N-terminus, the 167-residue chain is Intermembrane phospholipid transport system binding protein MlaD (167 aa).

The Cytoplasmic portion of the chain corresponds to 1–6 (MRQTIK). A helical; Signal-anchor for type II membrane protein membrane pass occupies residues 7 to 27 (YEFWVGLFLLLGIGALVFLGL). At 28-167 (RVANVQGFAE…GNEKSESTEQ (140 aa)) the chain is on the periplasmic side. An MCE/MlaD region spans residues 40–118 (SYTVTATFDN…GEQYIALTMG (79 aa)).

Belongs to the MlaD family. In terms of assembly, the complex is composed of two ATP-binding proteins (MlaF), two transmembrane proteins (MlaE), two cytoplasmic solute-binding proteins (MlaB) and six periplasmic solute-binding proteins (MlaD).

It localises to the cell inner membrane. In terms of biological role, part of the ABC transporter complex MlaFEDB, which is involved in a phospholipid transport pathway that maintains lipid asymmetry in the outer membrane by retrograde trafficking of phospholipids from the outer membrane to the inner membrane. MlaD functions in substrate binding with strong affinity for phospholipids and modulates ATP hydrolytic activity of the complex. The polypeptide is Intermembrane phospholipid transport system binding protein MlaD (Haemophilus influenzae (strain ATCC 51907 / DSM 11121 / KW20 / Rd)).